The chain runs to 169 residues: MAEENQTPATATEEQQAVLQIQRIYVKDISFEAPNLPHVFQQEWKPKLNFDLSTEAKQLGEDLYEVVLNISVETTLEDSGDLAFLCEVKQAGVFTISGLEDMQMAHCLTSQCPNMLFPYARELVSNLVNRGTFPALNLSPVNFDALFMEFLQRQEQESQNAESSTEVQH.

Belongs to the SecB family. In terms of assembly, homotetramer, a dimer of dimers. One homotetramer interacts with 1 SecA dimer.

Its subcellular location is the cytoplasm. Functionally, one of the proteins required for the normal export of preproteins out of the cell cytoplasm. It is a molecular chaperone that binds to a subset of precursor proteins, maintaining them in a translocation-competent state. It also specifically binds to its receptor SecA. The protein is Protein-export protein SecB of Mannheimia succiniciproducens (strain KCTC 0769BP / MBEL55E).